We begin with the raw amino-acid sequence, 241 residues long: Large ribosomal subunit protein uL2 (241 aa).

Residues 200–241 (AVDHPHGGGNRQHPGRPTTISRHAPAGRKVGSIAAKRTGKRR) are disordered.

This sequence belongs to the universal ribosomal protein uL2 family. As to quaternary structure, part of the 50S ribosomal subunit. Forms a bridge to the 30S subunit in the 70S ribosome.

In terms of biological role, one of the primary rRNA binding proteins. Required for association of the 30S and 50S subunits to form the 70S ribosome, for tRNA binding and peptide bond formation. It has been suggested to have peptidyltransferase activity; this is somewhat controversial. Makes several contacts with the 16S rRNA in the 70S ribosome. The protein is Large ribosomal subunit protein uL2 of Methanosphaera stadtmanae (strain ATCC 43021 / DSM 3091 / JCM 11832 / MCB-3).